A 380-amino-acid chain; its full sequence is Protein FAM110B (380 aa).

Residues 92–272 (ALGSPTLKGF…RPSLQRSKSD (181 aa)) form a disordered region. Gly residues predominate over residues 100–110 (GFGGGGGGAKS). Residues 127 to 138 (ILNSSEGSSTGS) are compositionally biased toward polar residues. The span at 153–162 (DAAELHRHSF) shows a compositional bias: basic and acidic residues. The segment covering 239-248 (KVAAPAAVKS) has biased composition (low complexity). Ser248 and Ser311 each carry phosphoserine. The segment at 327–347 (DCEQSQDSNSDLRNDDSANDR) is disordered. Residues 336-345 (SDLRNDDSAN) are compositionally biased toward basic and acidic residues.

This sequence belongs to the FAM110 family.

It is found in the cytoplasm. The protein localises to the cytoskeleton. The protein resides in the microtubule organizing center. It localises to the centrosome. The sequence is that of Protein FAM110B (FAM110B) from Bos taurus (Bovine).